Consider the following 344-residue polypeptide: Endoplasmic reticulum junction formation protein lunapark-1 (344 aa).

Topologically, residues 1 to 39 (MGNLFSRTKSPATELERVVLSIEDFKKRLQTISASNSST) are cytoplasmic. Residues 40 to 60 (LYYYYMGVIIILSIAMAHTWL) traverse the membrane as a helical segment. The Lumenal portion of the chain corresponds to 61 to 68 (RFDDPTKT). The helical transmembrane segment at 69-89 (YVACALVFGATVIVLTGRYII) threads the bilayer. Residues 90-344 (NCFFAWRTNR…ADETAVVEKS (255 aa)) are Cytoplasmic-facing. Positions 116–140 (DLVKETLKFKEAKEILDRYEEKTEA) form a coiled coil. 2 disordered regions span residues 136 to 155 (EKTE…HQQK) and 171 to 192 (QKRV…IAFD). Positions 140 to 155 (AGNTPTENSKLIHQQK) are enriched in polar residues. The segment at 239–264 (CSICHTHNGMSVPAEYPFISFRCFEC) adopts a C4-type; plays a role in ER morphology zinc-finger fold. The disordered stretch occupies residues 275-344 (PHLPITRPPM…ADETAVVEKS (70 aa)). Polar residues predominate over residues 312–326 (PNPSTDLTPSASQHG). The span at 327–344 (SDSEPEKNADETAVVEKS) shows a compositional bias: basic and acidic residues.

Belongs to the lunapark family.

It is found in the endoplasmic reticulum membrane. In terms of biological role, plays a role in tubular endoplasmic reticulum network formation and maintenance. May be involved in central nervous system development. Has a presynaptic role in neurotransmission. Likely to operate in synaptogenesis by regulating vesicular transport or localization. Required for correct localization of rab-3 and snb-1. The chain is Endoplasmic reticulum junction formation protein lunapark-1 from Caenorhabditis briggsae.